Consider the following 567-residue polypeptide: Oxygen-dependent choline dehydrogenase (567 aa).

4 to 33 (DYIIIGAGSAGNVLAARLTEDADVTVLLLE) provides a ligand contact to FAD. Histidine 473 serves as the catalytic Proton acceptor.

It belongs to the GMC oxidoreductase family. FAD is required as a cofactor.

The enzyme catalyses choline + A = betaine aldehyde + AH2. It catalyses the reaction betaine aldehyde + NAD(+) + H2O = glycine betaine + NADH + 2 H(+). The protein operates within amine and polyamine biosynthesis; betaine biosynthesis via choline pathway; betaine aldehyde from choline (cytochrome c reductase route): step 1/1. Involved in the biosynthesis of the osmoprotectant glycine betaine. Catalyzes the oxidation of choline to betaine aldehyde and betaine aldehyde to glycine betaine at the same rate. The protein is Oxygen-dependent choline dehydrogenase of Yersinia pestis (strain Pestoides F).